Reading from the N-terminus, the 517-residue chain is Crotonobetaine/carnitine--CoA ligase (517 aa).

The protein belongs to the ATP-dependent AMP-binding enzyme family.

The catalysed reaction is 4-(trimethylamino)butanoate + ATP + CoA = 4-(trimethylamino)butanoyl-CoA + AMP + diphosphate. It catalyses the reaction crotonobetaine + ATP + CoA = crotonobetainyl-CoA + AMP + diphosphate. The enzyme catalyses (R)-carnitine + ATP + CoA = (R)-carnitinyl-CoA + AMP + diphosphate. It functions in the pathway amine and polyamine metabolism; carnitine metabolism. Its function is as follows. Catalyzes the transfer of CoA to carnitine, generating the initial carnitinyl-CoA needed for the CaiB reaction cycle. Also has activity toward crotonobetaine and gamma-butyrobetaine. The sequence is that of Crotonobetaine/carnitine--CoA ligase from Escherichia coli O1:K1 / APEC.